Consider the following 51-residue polypeptide: Ovomucoid (51 aa).

Residues 3–51 form the Kazal-like domain; that stretch reads VDCSGYPKPACTLEYFPLCGSDNQTYANKCTFCNAVVEKNVTLNHLGEC. 3 disulfides stabilise this stretch: cysteine 5–cysteine 35, cysteine 13–cysteine 32, and cysteine 21–cysteine 51. The N-linked (GlcNAc...) asparagine glycan is linked to asparagine 42.

The protein localises to the secreted. The polypeptide is Ovomucoid (Nothoprocta perdicaria (Chilean tinamou)).